Consider the following 72-residue polypeptide: Translation initiation factor IF-1 (72 aa).

An S1-like domain is found at 1–72 (MAGNDVIEIE…TKGRITYRHK (72 aa)).

The protein belongs to the IF-1 family. As to quaternary structure, component of the 30S ribosomal translation pre-initiation complex which assembles on the 30S ribosome in the order IF-2 and IF-3, IF-1 and N-formylmethionyl-tRNA(fMet); mRNA recruitment can occur at any time during PIC assembly.

Its subcellular location is the cytoplasm. Its function is as follows. One of the essential components for the initiation of protein synthesis. Stabilizes the binding of IF-2 and IF-3 on the 30S subunit to which N-formylmethionyl-tRNA(fMet) subsequently binds. Helps modulate mRNA selection, yielding the 30S pre-initiation complex (PIC). Upon addition of the 50S ribosomal subunit IF-1, IF-2 and IF-3 are released leaving the mature 70S translation initiation complex. The sequence is that of Translation initiation factor IF-1 from Oenococcus oeni (strain ATCC BAA-331 / PSU-1).